Reading from the N-terminus, the 141-residue chain is Mite group 2 allergen Lep d 2 (141 aa).

Positions 1–16 are cleaved as a signal peptide; the sequence is MMKFIALFALVAVASA. Intrachain disulfides connect Cys-24–Cys-133, Cys-37–Cys-42, and Cys-88–Cys-93. 3 repeat units span residues 64-65, 68-69, and 72-73. A 3 X 2 AA repeats of K-V region spans residues 64–73; sequence KVTIKVLAKV.

It belongs to the NPC2 family. In terms of assembly, monomer.

The protein localises to the secreted. The sequence is that of Mite group 2 allergen Lep d 2 from Lepidoglyphus destructor (Storage mite).